A 219-amino-acid polypeptide reads, in one-letter code: 2-C-methyl-D-erythritol 4-phosphate cytidylyltransferase (219 aa).

Belongs to the IspD/TarI cytidylyltransferase family. IspD subfamily.

It carries out the reaction 2-C-methyl-D-erythritol 4-phosphate + CTP + H(+) = 4-CDP-2-C-methyl-D-erythritol + diphosphate. The protein operates within isoprenoid biosynthesis; isopentenyl diphosphate biosynthesis via DXP pathway; isopentenyl diphosphate from 1-deoxy-D-xylulose 5-phosphate: step 2/6. Functionally, catalyzes the formation of 4-diphosphocytidyl-2-C-methyl-D-erythritol from CTP and 2-C-methyl-D-erythritol 4-phosphate (MEP). This is 2-C-methyl-D-erythritol 4-phosphate cytidylyltransferase from Bacteroides fragilis (strain ATCC 25285 / DSM 2151 / CCUG 4856 / JCM 11019 / LMG 10263 / NCTC 9343 / Onslow / VPI 2553 / EN-2).